A 515-amino-acid chain; its full sequence is Serine--tRNA ligase, cytoplasmic (515 aa).

Residues 9-61 (RTDKGGDPEIIRETQRKRFKDVSLVDKLVQADTEWRKCRFTADNLNKAKNLCS) are interaction with tRNA. L-serine-binding residues include Thr-271 and Arg-302. Residues 302–304 (RQE) and 318–321 (VHQF) each bind ATP. Glu-325 contacts L-serine. 391 to 394 (ELVS) provides a ligand contact to ATP. Asn-427 contacts L-serine. The segment at 475–515 (PIDQETTKKQKKQQEGGKKKKHQGGDADLENKVENMSVNDS) is disordered. Basic and acidic residues predominate over residues 479–507 (ETTKKQKKQQEGGKKKKHQGGDADLENKV). Positions 482-494 (KKQKKQQEGGKKK) match the Nuclear localization signal motif.

It belongs to the class-II aminoacyl-tRNA synthetase family. Type-1 seryl-tRNA synthetase subfamily.

It is found in the cytoplasm. The protein localises to the nucleus. The catalysed reaction is tRNA(Ser) + L-serine + ATP = L-seryl-tRNA(Ser) + AMP + diphosphate + H(+). It catalyses the reaction tRNA(Sec) + L-serine + ATP = L-seryl-tRNA(Sec) + AMP + diphosphate + H(+). Its function is as follows. Catalyzes the attachment of serine to tRNA(Ser) in a two-step reaction: serine is first activated by ATP to form Ser-AMP and then transferred to the acceptor end of tRNA(Ser). Is probably also able to aminoacylate tRNA(Sec) with serine, to form the misacylated tRNA L-seryl-tRNA(Sec), which will be further converted into selenocysteinyl-tRNA(Sec). In the nucleus, binds to the vegfa core promoter and prevents myc binding and transcriptional activation by myc. Thereby inhibits the production of vegfa and sprouting angiogenesis mediated by vegfa. The sequence is that of Serine--tRNA ligase, cytoplasmic (sars1) from Danio rerio (Zebrafish).